Reading from the N-terminus, the 254-residue chain is Trans-aconitate 2-methyltransferase (254 aa).

Belongs to the methyltransferase superfamily. Tam family.

The protein resides in the cytoplasm. The enzyme catalyses trans-aconitate + S-adenosyl-L-methionine = (E)-3-(methoxycarbonyl)pent-2-enedioate + S-adenosyl-L-homocysteine. Functionally, catalyzes the S-adenosylmethionine monomethyl esterification of trans-aconitate. The polypeptide is Trans-aconitate 2-methyltransferase (Mycobacterium sp. (strain JLS)).